The sequence spans 868 residues: Alanine--tRNA ligase (868 aa).

The Zn(2+) site is built by His-555, His-559, Cys-657, and His-661. The interval 828–847 is disordered; it reads SQVGGKGGGRPDMAQAGGSE.

The protein belongs to the class-II aminoacyl-tRNA synthetase family. It depends on Zn(2+) as a cofactor.

The protein localises to the cytoplasm. It carries out the reaction tRNA(Ala) + L-alanine + ATP = L-alanyl-tRNA(Ala) + AMP + diphosphate. Its function is as follows. Catalyzes the attachment of alanine to tRNA(Ala) in a two-step reaction: alanine is first activated by ATP to form Ala-AMP and then transferred to the acceptor end of tRNA(Ala). Also edits incorrectly charged Ser-tRNA(Ala) and Gly-tRNA(Ala) via its editing domain. In Pseudoalteromonas translucida (strain TAC 125), this protein is Alanine--tRNA ligase.